The chain runs to 281 residues: Nucleotide-binding protein MADE_1004170 (281 aa).

An ATP-binding site is contributed by 8–15; that stretch reads GRSGSGKS. 56–59 lines the GTP pocket; sequence DVRN.

This sequence belongs to the RapZ-like family.

Its function is as follows. Displays ATPase and GTPase activities. This chain is Nucleotide-binding protein MADE_1004170, found in Alteromonas mediterranea (strain DSM 17117 / CIP 110805 / LMG 28347 / Deep ecotype).